Here is a 334-residue protein sequence, read N- to C-terminus: snRNA-activating protein complex subunit 2 (334 aa).

Disordered regions lie at residues 137 to 200 and 271 to 306; these read LHSK…STEE and AGGSLGPAAEGDGAGSKAPEETPPATEKAEHSELKS. A compositionally biased stretch (low complexity) spans 167–180; that stretch reads IPSSAPAAPSSAPR.

Part of the SNAPc complex composed of 5 subunits: SNAPC1, SNAPC2, SNAPC3, SNAPC4 and SNAPC5. SNAPC2 interacts with TBP and SNAPC4.

It localises to the nucleus. Functionally, part of the SNAPc complex required for the transcription of both RNA polymerase II and III small-nuclear RNA genes. Binds to the proximal sequence element (PSE), a non-TATA-box basal promoter element common to these 2 types of genes. Recruits TBP and BRF2 to the U6 snRNA TATA box. In Homo sapiens (Human), this protein is snRNA-activating protein complex subunit 2 (SNAPC2).